The following is a 766-amino-acid chain: BMP/retinoic acid-inducible neural-specific protein 3 (766 aa).

An N-terminal signal peptide occupies residues 1 to 33; that stretch reads MIWRRRAGAELSSLMALWEWIVLSLHCWVLAVA. The MACPF domain occupies 74 to 264; that stretch reads RYKIYREFGR…FVQAALSYIA (191 aa). Residues asparagine 168, asparagine 337, asparagine 456, asparagine 562, asparagine 609, and asparagine 641 are each glycosylated (N-linked (GlcNAc...) asparagine).

This sequence belongs to the BRINP family. In terms of tissue distribution, expressed in olfactory bulb, cerebellum and neuronal layers in hippocampus.

The protein localises to the secreted. It is found in the mitochondrion. Its function is as follows. Inhibits neuronal cell proliferation by negative regulation of the cell cycle transition. Promotes pituitary gonadotrope cell proliferation, migration and invasion, when overexpressed. May play a role in cell pituitary tumor development. The polypeptide is BMP/retinoic acid-inducible neural-specific protein 3 (Brinp3) (Rattus norvegicus (Rat)).